We begin with the raw amino-acid sequence, 179 residues long: Large ribosomal subunit protein uL5 (179 aa).

This sequence belongs to the universal ribosomal protein uL5 family. Part of the 50S ribosomal subunit; part of the 5S rRNA/L5/L18/L25 subcomplex. Contacts the 5S rRNA and the P site tRNA. Forms a bridge to the 30S subunit in the 70S ribosome.

Its function is as follows. This is one of the proteins that bind and probably mediate the attachment of the 5S RNA into the large ribosomal subunit, where it forms part of the central protuberance. In the 70S ribosome it contacts protein S13 of the 30S subunit (bridge B1b), connecting the 2 subunits; this bridge is implicated in subunit movement. Contacts the P site tRNA; the 5S rRNA and some of its associated proteins might help stabilize positioning of ribosome-bound tRNAs. In Pseudomonas aeruginosa (strain LESB58), this protein is Large ribosomal subunit protein uL5.